Consider the following 148-residue polypeptide: Protoporphyrinogen IX oxidase (148 aa).

4 helical membrane-spanning segments follow: residues 7–27 (YFLW…AALF), 58–78 (SFIA…MLLI), 86–106 (GGWL…HFYC), and 128–148 (FNEA…VKPF). Residue His15 coordinates heme. Lys92 serves as a coordination point for heme.

This sequence belongs to the HemJ family. Homodimer. Heme b is required as a cofactor.

It is found in the cell membrane. It catalyses the reaction protoporphyrinogen IX + 3 A = protoporphyrin IX + 3 AH2. Its pathway is porphyrin-containing compound metabolism; protoporphyrin-IX biosynthesis; protoporphyrin-IX from protoporphyrinogen-IX: step 1/1. In terms of biological role, catalyzes the oxidation of protoporphyrinogen IX to protoporphyrin IX. Is involved in the biosynthesis of tetrapyrrole molecules like heme. Does not use oxygen or artificial electron acceptors such as menadione or benzoquinone. This chain is Protoporphyrinogen IX oxidase, found in Helicobacter pylori (strain ATCC 700392 / 26695) (Campylobacter pylori).